The sequence spans 378 residues: Long-chain-fatty-acid--luciferin-component ligase (378 aa).

Belongs to the LuxE family.

The catalysed reaction is a long-chain fatty acid + L-cysteinyl-[protein] + ATP = an S-(long-chain fatty acyl)-L-cysteinyl-[protein] + AMP + diphosphate. It participates in lipid metabolism; fatty acid reduction for biolumincescence. Its function is as follows. Acyl-protein synthetase activates tetradecanoic acid. It is a component of the fatty acid reductase complex responsible for converting tetradecanoic acid to the aldehyde which serves as substrate in the luciferase-catalyzed reaction. This Aliivibrio fischeri (Vibrio fischeri) protein is Long-chain-fatty-acid--luciferin-component ligase.